Reading from the N-terminus, the 428-residue chain is 3-phosphoshikimate 1-carboxyvinyltransferase (428 aa).

3-phosphoshikimate contacts are provided by K22, S23, and R27. K22 lines the phosphoenolpyruvate pocket. Phosphoenolpyruvate contacts are provided by G98 and R126. Residues S172, S173, Q174, S200, D316, N339, and K343 each contribute to the 3-phosphoshikimate site. Residue Q174 coordinates phosphoenolpyruvate. D316 acts as the Proton acceptor in catalysis. Phosphoenolpyruvate-binding residues include R347, R389, and K414.

Belongs to the EPSP synthase family. In terms of assembly, monomer.

The protein resides in the cytoplasm. It catalyses the reaction 3-phosphoshikimate + phosphoenolpyruvate = 5-O-(1-carboxyvinyl)-3-phosphoshikimate + phosphate. The protein operates within metabolic intermediate biosynthesis; chorismate biosynthesis; chorismate from D-erythrose 4-phosphate and phosphoenolpyruvate: step 6/7. Its function is as follows. Catalyzes the transfer of the enolpyruvyl moiety of phosphoenolpyruvate (PEP) to the 5-hydroxyl of shikimate-3-phosphate (S3P) to produce enolpyruvyl shikimate-3-phosphate and inorganic phosphate. The protein is 3-phosphoshikimate 1-carboxyvinyltransferase of Psychromonas ingrahamii (strain DSM 17664 / CCUG 51855 / 37).